The chain runs to 600 residues: Chaperone protein DnaK (600 aa).

T175 is modified (phosphothreonine; by autocatalysis). The span at 569 to 578 (SFAQATAQQA) shows a compositional bias: low complexity. Residues 569–600 (SFAQATAQQANTSESDPKADDSNTIDAEIKQD) form a disordered region. Residues 583 to 600 (SDPKADDSNTIDAEIKQD) are compositionally biased toward basic and acidic residues.

This sequence belongs to the heat shock protein 70 family.

Acts as a chaperone. This chain is Chaperone protein DnaK, found in Mesomycoplasma hyopneumoniae (strain 7448) (Mycoplasma hyopneumoniae).